A 366-amino-acid polypeptide reads, in one-letter code: Protein-glutamate methylesterase/protein-glutamine glutaminase 2 (366 aa).

A Response regulatory domain is found at 3–119 (RLLIADDSAL…SLELDRLRPL (117 aa)). Aspartate 53 carries the post-translational modification 4-aspartylphosphate. Residues 149–168 (AASSPRAKAARRGAARQRAK) are disordered. Positions 156–166 (KAARRGAARQR) are enriched in basic residues. Residues 171 to 363 (PAPGLVLIGT…AAVIEWGNAD (193 aa)) enclose the CheB-type methylesterase domain. Catalysis depends on residues serine 181, histidine 208, and aspartate 305.

Belongs to the CheB family. Phosphorylated by CheA. Phosphorylation of the N-terminal regulatory domain activates the methylesterase activity.

The protein localises to the cytoplasm. The catalysed reaction is [protein]-L-glutamate 5-O-methyl ester + H2O = L-glutamyl-[protein] + methanol + H(+). It catalyses the reaction L-glutaminyl-[protein] + H2O = L-glutamyl-[protein] + NH4(+). Functionally, involved in chemotaxis. Part of a chemotaxis signal transduction system that modulates chemotaxis in response to various stimuli. Catalyzes the demethylation of specific methylglutamate residues introduced into the chemoreceptors (methyl-accepting chemotaxis proteins or MCP) by CheR. Also mediates the irreversible deamidation of specific glutamine residues to glutamic acid. This Rhodopseudomonas palustris (strain BisB18) protein is Protein-glutamate methylesterase/protein-glutamine glutaminase 2.